Reading from the N-terminus, the 943-residue chain is Isoleucine--tRNA ligase (943 aa).

Positions 59 to 69 (PYANGRIHLGH) match the 'HIGH' region motif. E577 contacts L-isoleucyl-5'-AMP. A 'KMSKS' region motif is present at residues 618-622 (KMSKS). An ATP-binding site is contributed by K621. 4 residues coordinate Zn(2+): C906, C909, C926, and C929.

It belongs to the class-I aminoacyl-tRNA synthetase family. IleS type 1 subfamily. Monomer. The cofactor is Zn(2+).

The protein resides in the cytoplasm. It carries out the reaction tRNA(Ile) + L-isoleucine + ATP = L-isoleucyl-tRNA(Ile) + AMP + diphosphate. Functionally, catalyzes the attachment of isoleucine to tRNA(Ile). As IleRS can inadvertently accommodate and process structurally similar amino acids such as valine, to avoid such errors it has two additional distinct tRNA(Ile)-dependent editing activities. One activity is designated as 'pretransfer' editing and involves the hydrolysis of activated Val-AMP. The other activity is designated 'posttransfer' editing and involves deacylation of mischarged Val-tRNA(Ile). This chain is Isoleucine--tRNA ligase, found in Stenotrophomonas maltophilia (strain K279a).